The primary structure comprises 147 residues: Ribonuclease H (147 aa).

Residues Asp8, Glu46, Asp68, and Asp132 each coordinate Mg(2+).

The protein belongs to the RNase H family. In terms of assembly, monomer. The cofactor is Mg(2+).

The protein localises to the cytoplasm. The catalysed reaction is Endonucleolytic cleavage to 5'-phosphomonoester.. In terms of biological role, endonuclease that specifically degrades the RNA of RNA-DNA hybrids. This chain is Ribonuclease H, found in Geotalea uraniireducens (strain Rf4) (Geobacter uraniireducens).